Consider the following 376-residue polypeptide: RCC1 domain-containing protein 1 (376 aa).

The segment at 1–169 is interaction with KDM8; the sequence is MAEERPGAWF…ARQLELGAEH (169 aa). One copy of the RCC1 1 repeat lies at 6-56; the sequence is PGAWFGFGFCGFGQELGSGRGRQVHSPSPLRAGVDICRVSASWSYTAFVTR. Residue R141 is modified to (3R)-3-hydroxyarginine. RCC1 repeat units lie at residues 176–227, 229–317, and 318–371; these read AGQV…CVSE, GDIY…VVTR, and TGEL…VYAV.

Found in a complex with KDM8. Interacts (via N-terminus) with KDM8 (via N-terminus). Post-translationally, specifically hydroxylated (with R stereochemistry) at C-3 of ARG-141 by KDM8.

It is found in the chromosome. Plays a role in transcriptional repression of satellite repeats, possibly by regulating H3K36 methylation levels in centromeric regions together with KDM8. Possibly together with KDM8, is involved in proper mitotic spindle organization and chromosome segregation. Plays a role in regulating alpha-tubulin deacetylation and cytoskeletal microtubule stability, thereby promoting cell migration and TGF-beta-induced epithelial to mesenchymal transition (EMT), potentially through the inhibition of KDM8. The chain is RCC1 domain-containing protein 1 from Homo sapiens (Human).